Here is a 449-residue protein sequence, read N- to C-terminus: Tubulin alpha chain (449 aa).

An MREC motif motif is present at residues 1–4 (MREC). Gln11 is a GTP binding site. Position 40 is an N6-acetyllysine (Lys40). Residues Glu71, Ser140, Gly144, Thr145, Thr179, Asn206, and Asn228 each contribute to the GTP site. Position 71 (Glu71) interacts with Mg(2+). Residue Glu254 is part of the active site. Positions 430–449 (KDYEEVGADSADAEDEGEEY) are disordered. Over residues 431 to 449 (DYEEVGADSADAEDEGEEY) the composition is skewed to acidic residues.

It belongs to the tubulin family. In terms of assembly, dimer of alpha and beta chains. A typical microtubule is a hollow water-filled tube with an outer diameter of 25 nm and an inner diameter of 15 nM. Alpha-beta heterodimers associate head-to-tail to form protofilaments running lengthwise along the microtubule wall with the beta-tubulin subunit facing the microtubule plus end conferring a structural polarity. Microtubules usually have 13 protofilaments but different protofilament numbers can be found in some organisms and specialized cells. Mg(2+) serves as cofactor. Some glutamate residues at the C-terminus are polyglycylated, resulting in polyglycine chains on the gamma-carboxyl group. Glycylation is mainly limited to tubulin incorporated into axonemes (cilia and flagella) whereas glutamylation is prevalent in neuronal cells, centrioles, axonemes, and the mitotic spindle. Both modifications can coexist on the same protein on adjacent residues, and lowering polyglycylation levels increases polyglutamylation, and reciprocally. The precise function of polyglycylation is still unclear. In terms of processing, some glutamate residues at the C-terminus are polyglutamylated, resulting in polyglutamate chains on the gamma-carboxyl group. Polyglutamylation plays a key role in microtubule severing by spastin (SPAST). SPAST preferentially recognizes and acts on microtubules decorated with short polyglutamate tails: severing activity by SPAST increases as the number of glutamates per tubulin rises from one to eight, but decreases beyond this glutamylation threshold. Post-translationally, acetylation of alpha chains at Lys-40 is located inside the microtubule lumen. This modification has been correlated with increased microtubule stability, intracellular transport and ciliary assembly. Undergoes a tyrosination/detyrosination cycle, the cyclic removal and re-addition of a C-terminal tyrosine residue by the enzymes tubulin tyrosine carboxypeptidase (MATCAP1, VASH1 or VASH2) and tubulin tyrosine ligase (TTL), respectively. In terms of processing, tyrosination promotes microtubule interaction with CAP-Gly microtubule plus-end tracking proteins. Tyrosinated tubulins regulate the initiation of dynein-driven motility. Post-translationally, detyrosination is involved in metaphase plate congression by guiding chromosomes during mitosis. Detyrosination increases microtubules-dependent mechanotransduction in dystrophic cardiac and skeletal muscle. In cardiomyocytes, detyrosinated microtubules are required to resist to contractile compression during contraction.

It localises to the cytoplasm. It is found in the cytoskeleton. The catalysed reaction is GTP + H2O = GDP + phosphate + H(+). Its function is as follows. Tubulin is the major constituent of microtubules, a cylinder consisting of laterally associated linear protofilaments composed of alpha- and beta-tubulin heterodimers. Microtubules grow by the addition of GTP-tubulin dimers to the microtubule end, where a stabilizing cap forms. Below the cap, tubulin dimers are in GDP-bound state, owing to GTPase activity of alpha-tubulin. The polypeptide is Tubulin alpha chain (tuba) (Xenopus laevis (African clawed frog)).